We begin with the raw amino-acid sequence, 388 residues long: Succinate--CoA ligase [ADP-forming] subunit beta (388 aa).

Residues 9–244 (KQLFARYGLP…PSQEDSREAH (236 aa)) enclose the ATP-grasp domain. ATP contacts are provided by residues K46, 53 to 55 (GRG), E99, T102, and E107. Mg(2+) is bound by residues N199 and D213. Residues N264 and 321-323 (GIV) each bind substrate.

It belongs to the succinate/malate CoA ligase beta subunit family. As to quaternary structure, heterotetramer of two alpha and two beta subunits. Mg(2+) is required as a cofactor.

The catalysed reaction is succinate + ATP + CoA = succinyl-CoA + ADP + phosphate. It catalyses the reaction GTP + succinate + CoA = succinyl-CoA + GDP + phosphate. The protein operates within carbohydrate metabolism; tricarboxylic acid cycle; succinate from succinyl-CoA (ligase route): step 1/1. Succinyl-CoA synthetase functions in the citric acid cycle (TCA), coupling the hydrolysis of succinyl-CoA to the synthesis of either ATP or GTP and thus represents the only step of substrate-level phosphorylation in the TCA. The beta subunit provides nucleotide specificity of the enzyme and binds the substrate succinate, while the binding sites for coenzyme A and phosphate are found in the alpha subunit. This Erwinia tasmaniensis (strain DSM 17950 / CFBP 7177 / CIP 109463 / NCPPB 4357 / Et1/99) protein is Succinate--CoA ligase [ADP-forming] subunit beta.